Consider the following 350-residue polypeptide: GDSL esterase/lipase At2g42990 (350 aa).

Residues 1–24 form the signal peptide; that stretch reads MATHYLSPSILCIILTTLVSIAGA. The active-site Nucleophile is Ser35. N-linked (GlcNAc...) asparagine glycans are attached at residues Asn98, Asn117, and Asn141. Catalysis depends on residues Asp325 and His328.

Belongs to the 'GDSL' lipolytic enzyme family.

The protein resides in the secreted. In Arabidopsis thaliana (Mouse-ear cress), this protein is GDSL esterase/lipase At2g42990.